A 425-amino-acid chain; its full sequence is MAKQIQAIRGMNDCLPEQSPVWQKVEQILRQVVASYGYSEVRMPIVEQTHLFKRAIGEVTDVVEKEMYTFEDRNGDSLSLRPEGTASCVRAGIEHGLLYNQERRMWYMGPMFRHERPQKGRYRQFHQFGVELFGINGPDIDAELIMLTHRLWRLFGISEHVTLQLNTLGQSSERAAYRDALVAYLEQYKDQLDEESQRRMYSNPLRVLDSKDEKVQAILVGAPRLFDHLGEESLAHFEGLKRLLESAGIQYEVNERLVRGLDYYNLTVFEWVTNSLGAQGTVCAGGRYDGLVEQLGGQPTPAVGFAMGMERLVLMLETLELNGDIRPAVDVYLAMVGEGTEQAGFQLAERLRDALPDLRLMSHCGGGNFKKQLKRADKSGAAIALILGETEVQNGEITIKYLRGQAEQQTVTVDAAIALLAAKGE.

It belongs to the class-II aminoacyl-tRNA synthetase family. As to quaternary structure, homodimer.

It localises to the cytoplasm. The catalysed reaction is tRNA(His) + L-histidine + ATP = L-histidyl-tRNA(His) + AMP + diphosphate + H(+). This chain is Histidine--tRNA ligase, found in Aeromonas hydrophila subsp. hydrophila (strain ATCC 7966 / DSM 30187 / BCRC 13018 / CCUG 14551 / JCM 1027 / KCTC 2358 / NCIMB 9240 / NCTC 8049).